A 682-amino-acid chain; its full sequence is TBC1 domain family member 23 (682 aa).

A Rab-GAP TBC domain is found at 29–210 (PVPCDLRTKV…AIWDNYLQQA (182 aa)). The 109-residue stretch at 318–426 (DGVRFFVVDC…GFMALQQHLA (109 aa)) folds into the Rhodanese domain.

The protein localises to the golgi apparatus. It localises to the trans-Golgi network. It is found in the cytoplasmic vesicle. Its function is as follows. Putative Rab GTPase-activating protein which plays a role in vesicular trafficking. Involved in endosome-to-Golgi trafficking. Acts as a bridging protein by binding simultaneously to golgins, located at the trans-Golgi, and to the WASH complex, located on endosome-derived vesicles. Plays a role in brain development. May act as a general inhibitor of innate immunity signaling. In Xenopus laevis (African clawed frog), this protein is TBC1 domain family member 23 (tbc1d23).